The sequence spans 399 residues: 1-deoxy-D-xylulose 5-phosphate reductoisomerase (399 aa).

Positions 13, 14, 15, 16, and 127 each coordinate NADPH. Position 128 (lysine 128) interacts with 1-deoxy-D-xylulose 5-phosphate. Glutamate 129 contacts NADPH. Position 153 (aspartate 153) interacts with Mn(2+). Residues serine 154, glutamate 155, serine 187, and histidine 210 each coordinate 1-deoxy-D-xylulose 5-phosphate. Glutamate 155 is a Mn(2+) binding site. Glycine 216 contributes to the NADPH binding site. 4 residues coordinate 1-deoxy-D-xylulose 5-phosphate: serine 223, asparagine 228, lysine 229, and glutamate 232. Mn(2+) is bound at residue glutamate 232.

It belongs to the DXR family. It depends on Mg(2+) as a cofactor. Mn(2+) is required as a cofactor.

The catalysed reaction is 2-C-methyl-D-erythritol 4-phosphate + NADP(+) = 1-deoxy-D-xylulose 5-phosphate + NADPH + H(+). The protein operates within isoprenoid biosynthesis; isopentenyl diphosphate biosynthesis via DXP pathway; isopentenyl diphosphate from 1-deoxy-D-xylulose 5-phosphate: step 1/6. In terms of biological role, catalyzes the NADPH-dependent rearrangement and reduction of 1-deoxy-D-xylulose-5-phosphate (DXP) to 2-C-methyl-D-erythritol 4-phosphate (MEP). In Bordetella pertussis (strain Tohama I / ATCC BAA-589 / NCTC 13251), this protein is 1-deoxy-D-xylulose 5-phosphate reductoisomerase.